The following is a 109-amino-acid chain: Large ribosomal subunit protein uL22 (109 aa).

Belongs to the universal ribosomal protein uL22 family. Part of the 50S ribosomal subunit.

This protein binds specifically to 23S rRNA; its binding is stimulated by other ribosomal proteins, e.g. L4, L17, and L20. It is important during the early stages of 50S assembly. It makes multiple contacts with different domains of the 23S rRNA in the assembled 50S subunit and ribosome. Functionally, the globular domain of the protein is located near the polypeptide exit tunnel on the outside of the subunit, while an extended beta-hairpin is found that lines the wall of the exit tunnel in the center of the 70S ribosome. This chain is Large ribosomal subunit protein uL22, found in Polynucleobacter asymbioticus (strain DSM 18221 / CIP 109841 / QLW-P1DMWA-1) (Polynucleobacter necessarius subsp. asymbioticus).